A 460-amino-acid chain; its full sequence is Bifunctional protein GlmU (460 aa).

A pyrophosphorylase region spans residues 1-232 (MALNVVILAA…AIEVEGANNR (232 aa)). UDP-N-acetyl-alpha-D-glucosamine contacts are provided by residues 8–11 (LAAG), lysine 22, glutamine 73, 78–79 (GT), 100–102 (YGD), glycine 137, glutamate 157, asparagine 172, and asparagine 230. Aspartate 102 lines the Mg(2+) pocket. Asparagine 230 is a Mg(2+) binding site. The segment at 233–253 (VQLAQLERAYQAREAEKLMLA) is linker. An N-acetyltransferase region spans residues 254–460 (GANLRDPSRI…GWQRPVKIKK (207 aa)). Arginine 336 and lysine 354 together coordinate UDP-N-acetyl-alpha-D-glucosamine. Residue histidine 366 is the Proton acceptor of the active site. Residues tyrosine 369 and asparagine 380 each coordinate UDP-N-acetyl-alpha-D-glucosamine. Residues alanine 383, 389 to 390 (NY), serine 408, alanine 426, and arginine 443 contribute to the acetyl-CoA site.

The protein in the N-terminal section; belongs to the N-acetylglucosamine-1-phosphate uridyltransferase family. This sequence in the C-terminal section; belongs to the transferase hexapeptide repeat family. As to quaternary structure, homotrimer. It depends on Mg(2+) as a cofactor.

It localises to the cytoplasm. The catalysed reaction is alpha-D-glucosamine 1-phosphate + acetyl-CoA = N-acetyl-alpha-D-glucosamine 1-phosphate + CoA + H(+). It carries out the reaction N-acetyl-alpha-D-glucosamine 1-phosphate + UTP + H(+) = UDP-N-acetyl-alpha-D-glucosamine + diphosphate. It functions in the pathway nucleotide-sugar biosynthesis; UDP-N-acetyl-alpha-D-glucosamine biosynthesis; N-acetyl-alpha-D-glucosamine 1-phosphate from alpha-D-glucosamine 6-phosphate (route II): step 2/2. It participates in nucleotide-sugar biosynthesis; UDP-N-acetyl-alpha-D-glucosamine biosynthesis; UDP-N-acetyl-alpha-D-glucosamine from N-acetyl-alpha-D-glucosamine 1-phosphate: step 1/1. The protein operates within bacterial outer membrane biogenesis; LPS lipid A biosynthesis. Its function is as follows. Catalyzes the last two sequential reactions in the de novo biosynthetic pathway for UDP-N-acetylglucosamine (UDP-GlcNAc). The C-terminal domain catalyzes the transfer of acetyl group from acetyl coenzyme A to glucosamine-1-phosphate (GlcN-1-P) to produce N-acetylglucosamine-1-phosphate (GlcNAc-1-P), which is converted into UDP-GlcNAc by the transfer of uridine 5-monophosphate (from uridine 5-triphosphate), a reaction catalyzed by the N-terminal domain. This is Bifunctional protein GlmU from Shewanella baltica (strain OS185).